A 59-amino-acid chain; its full sequence is Protein translocase subunit SecE (59 aa).

A helical transmembrane segment spans residues Ile30 to Ile50.

Belongs to the SecE/SEC61-gamma family. Component of the Sec protein translocase complex. Heterotrimer consisting of SecY, SecE and SecG subunits. The heterotrimers can form oligomers, although 1 heterotrimer is thought to be able to translocate proteins. Interacts with the ribosome. Interacts with SecDF, and other proteins may be involved. Interacts with SecA.

Its subcellular location is the cell membrane. Functionally, essential subunit of the Sec protein translocation channel SecYEG. Clamps together the 2 halves of SecY. May contact the channel plug during translocation. This Bacillus subtilis (strain 168) protein is Protein translocase subunit SecE.